Reading from the N-terminus, the 178-residue chain is uncharacterized protein (178 aa).

The next 5 helical transmembrane spans lie at 13 to 33 (GIVL…FFMP), 48 to 68 (MLNA…LIMI), 80 to 100 (ILAA…YHSI), 115 to 135 (IYFF…PLAL), and 155 to 175 (WTMP…LMIS).

The protein localises to the cell membrane. This is an uncharacterized protein from Bacillus subtilis (strain 168).